A 505-amino-acid polypeptide reads, in one-letter code: Peroxisome proliferator-activated receptor gamma (505 aa).

Residue Thr-84 is glycosylated (O-linked (GlcNAc) threonine). Phosphoserine is present on Ser-112. Positions 136-210 (AIECRVCGDK…VGMSHNAIRF (75 aa)) form a DNA-binding region, nuclear receptor. 2 consecutive NR C4-type zinc fingers follow at residues 139-159 (CRVC…CEGC) and 176-198 (CDLN…FQKC). Residues 205–280 (HNAIRFGRMP…DKSPFVIYDM (76 aa)) are interaction with FAM120B. An NR LBD domain is found at 238 to 503 (DLRALAKHLY…HPLLQEIYKD (266 aa)). Lys-252 participates in a covalent cross-link: Glycyl lysine isopeptide (Lys-Gly) (interchain with G-Cter in ubiquitin). Rosiglitazone is bound by residues 314–317 (QFRS), His-351, His-477, and Tyr-501. The short motif at 495 to 503 (PLLQEIYKD) is the 9aaTAD element.

It belongs to the nuclear hormone receptor family. NR1 subfamily. In terms of assembly, interacts with FOXO1 (acetylated form). Heterodimer with other nuclear receptors, such as RXRA. The heterodimer with the retinoic acid receptor RXRA is called adipocyte-specific transcription factor ARF6. Interacts with NCOA6 coactivator, leading to a strong increase in transcription of target genes. Interacts with coactivator PPARBP, leading to a mild increase in transcription of target genes. Interacts with NOCA7 in a ligand-inducible manner. Interacts with NCOA1 and NCOA2 LXXLL motifs. Interacts with ASXL1, ASXL2, DNTTIP2, FAM120B, MAP2K1/MEK1, NR0B2, PDPK1, PRDM16, PRMT2 and TGFB1I1. Interacts (when activated by agonist) with PPP5C. Interacts with HELZ2 and THRAP3; the interaction stimulates the transcriptional activity of PPARG. Interacts with PER2, the interaction is ligand dependent and blocks PPARG recruitment to target promoters. Interacts with NOCT. Interacts with ACTN4. Interacts (when in the liganded conformation) with GPS2. Interacts with CRY1 and CRY2 in a ligand-dependent manner. In the absence of hormonal ligand, interacts with TACC1. In macrophages, interacts with PAQR3 and STUB1; the interactions promote PPARG poylubiquitination and STUB1-mediated degradation. O-GlcNAcylation at Thr-84 reduces transcriptional activity in adipocytes. In terms of processing, phosphorylated in basal conditions and dephosphorylated when treated with the ligand. May be dephosphorylated by PPP5C. The phosphorylated form may be inactive and dephosphorylation at Ser-112 induces adipogenic activity. Post-translationally, ubiquitinated by E3 ubiquitin-protein ligase complex containing FBXO9; leading to proteasomal degradation. Ubiquitinated at Lys-252 by TRIM55 leading to proteasomal degradation. Ubiquitinated by E3 ubiquitin-protein ligase STUB1/CHIP; leading to proteasomal degradation. As to expression, highest expression in adipose tissue. Lower in skeletal muscle, spleen, heart and liver. Also detectable in placenta, lung and ovary.

It localises to the nucleus. Its subcellular location is the cytoplasm. Its activity is regulated as follows. PDPK1 activates its transcriptional activity independently of its kinase activity. Functionally, nuclear receptor that binds peroxisome proliferators such as hypolipidemic drugs and fatty acids. Once activated by a ligand, the nuclear receptor binds to DNA specific PPAR response elements (PPRE) and modulates the transcription of its target genes, such as acyl-CoA oxidase. It therefore controls the peroxisomal beta-oxidation pathway of fatty acids. Key regulator of adipocyte differentiation and glucose homeostasis. ARF6 acts as a key regulator of the tissue-specific adipocyte P2 (aP2) enhancer. Acts as a critical regulator of gut homeostasis by suppressing NF-kappa-B-mediated pro-inflammatory responses. Plays a role in the regulation of cardiovascular circadian rhythms by regulating the transcription of BMAL1 in the blood vessels. (Microbial infection) Upon treatment with M.tuberculosis or its lipoprotein LpqH, phosphorylation of MAPK p38 and IL-6 production are modulated, probably via this protein. This Homo sapiens (Human) protein is Peroxisome proliferator-activated receptor gamma (PPARG).